A 423-amino-acid polypeptide reads, in one-letter code: Histidine--tRNA ligase (423 aa).

Belongs to the class-II aminoacyl-tRNA synthetase family. As to quaternary structure, homodimer.

It is found in the cytoplasm. It carries out the reaction tRNA(His) + L-histidine + ATP = L-histidyl-tRNA(His) + AMP + diphosphate + H(+). This Actinobacillus pleuropneumoniae serotype 7 (strain AP76) protein is Histidine--tRNA ligase.